We begin with the raw amino-acid sequence, 129 residues long: Glycine cleavage system H protein (129 aa).

Residues 24-106 form the Lipoyl-binding domain; the sequence is LVRVGISAFA…HGEGWLLVLR (83 aa). Lysine 65 bears the N6-lipoyllysine mark.

Belongs to the GcvH family. In terms of assembly, the glycine cleavage system is composed of four proteins: P, T, L and H. It depends on (R)-lipoate as a cofactor.

The glycine cleavage system catalyzes the degradation of glycine. The H protein shuttles the methylamine group of glycine from the P protein to the T protein. In Synechococcus sp. (strain CC9605), this protein is Glycine cleavage system H protein.